The sequence spans 309 residues: Elongation factor Ts (309 aa).

The segment at 82-85 (TDFV) is involved in Mg(2+) ion dislocation from EF-Tu.

This sequence belongs to the EF-Ts family.

It localises to the cytoplasm. Its function is as follows. Associates with the EF-Tu.GDP complex and induces the exchange of GDP to GTP. It remains bound to the aminoacyl-tRNA.EF-Tu.GTP complex up to the GTP hydrolysis stage on the ribosome. The sequence is that of Elongation factor Ts from Rickettsia bellii (strain OSU 85-389).